A 298-amino-acid polypeptide reads, in one-letter code: GTPase Era (298 aa).

An Era-type G domain is found at 8-176 (RCGRIAVIGR…VSDLLALLPE (169 aa)). The G1 stretch occupies residues 16–23 (GRPNVGKS). 16–23 (GRPNVGKS) is a binding site for GTP. A G2 region spans residues 42–46 (QTTRH). Positions 63–66 (DTPG) are G3. GTP contacts are provided by residues 63–67 (DTPGL) and 125–128 (NKID). The segment at 125–128 (NKID) is G4. The tract at residues 155 to 157 (VSA) is G5. In terms of domain architecture, KH type-2 spans 199 to 283 (VREQVMRQLG…FLETWVRVRK (85 aa)).

This sequence belongs to the TRAFAC class TrmE-Era-EngA-EngB-Septin-like GTPase superfamily. Era GTPase family. Monomer.

It is found in the cytoplasm. The protein resides in the cell inner membrane. Its function is as follows. An essential GTPase that binds both GDP and GTP, with rapid nucleotide exchange. Plays a role in 16S rRNA processing and 30S ribosomal subunit biogenesis and possibly also in cell cycle regulation and energy metabolism. The polypeptide is GTPase Era (Xylella fastidiosa (strain Temecula1 / ATCC 700964)).